A 207-amino-acid polypeptide reads, in one-letter code: MRTRVKICGVTRPEDAAAAVELGADAIGLVFCDASPRAVDMKEARAIVAAVPAFVSVVGLFVDPKPGQVEVAVEGLHLDTLQFHGNEAPELCRHYERRYVKAVPMGGGADPSEYVAAYPDASGFLFDSHRVGERGGRGESFDHDTIPGGVRGLTVAGGLSAENVAEVVRKVRPFAVDVSSGVESEPGIKDRERIARFLAEVERGDET.

It belongs to the TrpF family.

The catalysed reaction is N-(5-phospho-beta-D-ribosyl)anthranilate = 1-(2-carboxyphenylamino)-1-deoxy-D-ribulose 5-phosphate. It functions in the pathway amino-acid biosynthesis; L-tryptophan biosynthesis; L-tryptophan from chorismate: step 3/5. In Halorhodospira halophila (strain DSM 244 / SL1) (Ectothiorhodospira halophila (strain DSM 244 / SL1)), this protein is N-(5'-phosphoribosyl)anthranilate isomerase.